The chain runs to 513 residues: MKLAYWMYAGPAHIGTLRVASSFKNVHAIMHAPLGDDYFNVMRSMLERERDFTPVTASIVDRHVLARGSQEKVVENITRKDQEENPDLIVLTPTCTSSILQEDLQNFVNRSSMSSKCDVILADVNHYRVNELQAADRTLEQIIKYYLNDAVKQKNVDRSITEYPSVNIIGFFTLGFHQQHDCRELKRLFNDLGIQINQIIPEGGSVTDIKNLPNAWFNVVPYREIGLMTATFLEKEFGMPYVSTTPMGIVDTAKFIRELQFYVNFYALEKIGYKVNYESYIDQQTRFVSQAAWFSRSIDCQNLTGKKAFVYGDSTHAVSMTKILSREMGINVICAGTYCKQDSQWFKEQVSEYCEQILITDNHTEVGDMIAKLEPSAIFGTQMERHIGKRLGIPCGVISAPVHIQNFPLSYRPFLGYEGTNQIADLVYNSFTLGMEDHLLEIFGGHDTKEVITKSLSTDLDLTWTMESQKELSKIPGFVRGKIKRNTEKYAREKGITSITVEVMYAAKESLSA.

D36 contributes to the [4Fe-4S] cluster binding site. The Proton donor role is filled by D299. 434–435 (GM) contributes to the substrate binding site.

This sequence belongs to the ChlB/BchB/BchZ family. Protochlorophyllide reductase is composed of three subunits; ChlL, ChlN and ChlB. Forms a heterotetramer of two ChlB and two ChlN subunits. It depends on [4Fe-4S] cluster as a cofactor.

It localises to the plastid. It is found in the chloroplast. The catalysed reaction is chlorophyllide a + oxidized 2[4Fe-4S]-[ferredoxin] + 2 ADP + 2 phosphate = protochlorophyllide a + reduced 2[4Fe-4S]-[ferredoxin] + 2 ATP + 2 H2O. Its pathway is porphyrin-containing compound metabolism; chlorophyll biosynthesis (light-independent). Component of the dark-operative protochlorophyllide reductase (DPOR) that uses Mg-ATP and reduced ferredoxin to reduce ring D of protochlorophyllide (Pchlide) to form chlorophyllide a (Chlide). This reaction is light-independent. The NB-protein (ChlN-ChlB) is the catalytic component of the complex. The chain is Light-independent protochlorophyllide reductase subunit B from Chaetosphaeridium globosum (Charophycean green alga).